The chain runs to 292 residues: Large ribosomal subunit protein bL19m (292 aa).

Residues 39-68 form a disordered region; that stretch reads GPGRRQITGPSEPGVFQPPPKPVIVDKRGP. The residue at position 77 (serine 77) is a Phosphoserine.

It belongs to the bacterial ribosomal protein bL19 family. In terms of assembly, component of the mitochondrial ribosome large subunit (39S) which comprises a 16S rRNA and about 50 distinct proteins.

The protein localises to the mitochondrion. This is Large ribosomal subunit protein bL19m (MRPL19) from Bos taurus (Bovine).